The following is a 276-amino-acid chain: Undecaprenyl-diphosphatase (276 aa).

Helical transmembrane passes span 40–60 (GLAFDTILHIGTLVAIFTFFW), 98–118 (WLIIVGTIPTGIMGILLKDAI), 121–141 (IFRGTLFVGIFLLVTAAVLYY), 155–175 (MSFKQALIVGICQGLAVFPGI), 200–220 (FLLSIPAVIGAGLIQIKDIAT), 227–247 (VLLAGFISSVIFGYLSIKLLM), and 255–275 (LDIFAYYCTIIGIITIILSVV).

The protein belongs to the UppP family.

Its subcellular location is the cell membrane. It catalyses the reaction di-trans,octa-cis-undecaprenyl diphosphate + H2O = di-trans,octa-cis-undecaprenyl phosphate + phosphate + H(+). Its function is as follows. Catalyzes the dephosphorylation of undecaprenyl diphosphate (UPP). The polypeptide is Undecaprenyl-diphosphatase (Methanosphaera stadtmanae (strain ATCC 43021 / DSM 3091 / JCM 11832 / MCB-3)).